We begin with the raw amino-acid sequence, 388 residues long: GDP-4-keto-6-deoxy-D-mannose 3-dehydratase (388 aa).

A GDP-4-dehydro-alpha-D-rhamnose-binding site is contributed by 26–29 (KMFT). A helical transmembrane segment spans residues 49-69 (YAVMVSSGSTANLLMIAALFF). Pyridoxal 5'-phosphate is bound by residues 56-57 (GS), Trp-88, Glu-162, and Ser-183. His-188 acts as the Proton donor/acceptor in catalysis. His-215 serves as a coordination point for L-glutamate. Arg-219 is a GDP-4-dehydro-alpha-D-rhamnose binding site. Position 248 (Asn-248) interacts with pyridoxal 5'-phosphate. Arg-250 provides a ligand contact to L-glutamate. Glu-329 contacts GDP-4-dehydro-alpha-D-rhamnose.

This sequence belongs to the DegT/DnrJ/EryC1 family. Homodimer. Requires pyridoxal 5'-phosphate as cofactor.

The protein resides in the cell membrane. It catalyses the reaction GDP-4-dehydro-alpha-D-rhamnose + L-glutamate = GDP-4-dehydro-3,6-dideoxy-alpha-D-mannose + 2-oxoglutarate + NH4(+). The protein operates within nucleotide-sugar metabolism; GDP-L-colitose biosynthesis. In terms of biological role, involved in the biosynthesis of L-colitose, a 3,6-dideoxyhexose present in the O-antigen region of lipopolysaccharides (LPS), where it serves as an antigenic determinant and is vital for bacterial defense and survival. Catalyzes the removal of the C3'-hydroxyl group from GDP-4-keto-6-deoxy-D-mannose via a combined transamination-deoxygenation reaction. The catalysis is initiated by a transamination step in which pyridoxal 5'-phosphate (PLP) is converted to pyridoxamine 5'-phosphate (PMP) in the presence of L-glutamate. This coenzyme then forms a Schiff base with GDP-4-keto-6-deoxy-D-mannose and the resulting adduct undergoes a PMP-mediated beta-dehydration reaction to give a sugar enamine intermediate, which after tautomerization and hydrolysis to release ammonia yields GDP-4-keto-3,6-dideoxy-D-mannose as a product. In vitro, is able to catalyze the formation of GDP-4-keto-3,6-dideoxymannose using GDP-perosamine rather than GDP-4-keto-6-deoxymannose as a substrate, with no need of glutamate. The protein is GDP-4-keto-6-deoxy-D-mannose 3-dehydratase of Escherichia coli O55:H7 (strain CB9615 / EPEC).